The primary structure comprises 340 residues: NADPH dehydrogenase (340 aa).

Position 23–26 (23–26 (SPMC)) interacts with FMN. Y28 provides a ligand contact to substrate. The FMN site is built by A60 and Q102. Residue 164–167 (HGAH) participates in substrate binding. Residues R215 and 307-308 (AR) each bind FMN.

The protein belongs to the NADH:flavin oxidoreductase/NADH oxidase family. NamA subfamily. Homotetramer. It depends on FMN as a cofactor.

It carries out the reaction A + NADPH + H(+) = AH2 + NADP(+). Its function is as follows. Catalyzes the reduction of the double bond of an array of alpha,beta-unsaturated aldehydes and ketones. It also reduces the nitro group of nitroester and nitroaromatic compounds. It could have a role in detoxification processes. The polypeptide is NADPH dehydrogenase (Geobacillus sp. (strain WCH70)).